The sequence spans 364 residues: Medium-wave-sensitive opsin 1 (364 aa).

Residues 1-23 (MTQPWGPQMLAGGQPPESHEDST) form a disordered region. Residues 1 to 52 (MTQPWGPQMLAGGQPPESHEDSTQASIFTYTNSNSTRGPFEGPNFHIAPRWV) lie on the Extracellular side of the membrane. The tract at residues 17–43 (ESHEDSTQASIFTYTNSNSTRGPFEGP) is required for 11-cis-retinal regeneration. The N-linked (GlcNAc...) asparagine glycan is linked to Asn34. The helical transmembrane segment at 53–77 (YHLTSAWMILVVIASVFTNGLVLVA) threads the bilayer. Over 78–89 (TMRFKKLRHPLN) the chain is Cytoplasmic. Residues 90–115 (WILVNLAVADLAETVIASTISVVNQF) traverse the membrane as a helical segment. Topologically, residues 116–129 (YGYFVLGHPLCVVE) are extracellular. Cysteines 126 and 203 form a disulfide. Residues 130–149 (GYTVSLCGITGLWSLAIISW) traverse the membrane as a helical segment. Residues 150–168 (ERWLVVCKPFGNVRFDAKL) lie on the Cytoplasmic side of the membrane. A helical transmembrane segment spans residues 169–192 (AIAGIAFSWIWAAVWTAPPIFGWS). At 193–218 (RYWPYGLKTSCGPDVFSGTSYPGVQS) the chain is on the extracellular side. A helical membrane pass occupies residues 219–246 (YMMVLMVTCCIIPLSVIVLCYLQVWMAI). Over 247–268 (RTVAKQQKESESTQKAEKEVTR) the chain is Cytoplasmic. The helical transmembrane segment at 269–292 (MVVVMVFAYCLCWGPYTFFACFAT) threads the bilayer. The Extracellular portion of the chain corresponds to 293–300 (AHPGYSFH). Residues 301 to 325 (PLVAAIPSYFAKSATIYNPIIYVFM) form a helical membrane-spanning segment. Lys312 carries the post-translational modification N6-(retinylidene)lysine. The Cytoplasmic segment spans residues 326–364 (NRQFRNCILQLFGKKVEDSSELSSASRTEASSVSSVSPA).

This sequence belongs to the G-protein coupled receptor 1 family. Opsin subfamily. Monomer. Homodimer. Homotetramer. O-glycosylated. Post-translationally, phosphorylated on some or all of the serine and threonine residues present in the C-terminal region. In terms of tissue distribution, expressed in cone photoreceptor cells.

The protein localises to the membrane. In terms of biological role, visual pigments are the light-absorbing molecules that mediate vision. They consist of an apoprotein, opsin, covalently linked to cis-retinal. May increase spectral sensitivity in dim light. The protein is Medium-wave-sensitive opsin 1 (OPN1MW) of Oryctolagus cuniculus (Rabbit).